A 185-amino-acid chain; its full sequence is GTP cyclohydrolase 1 (185 aa).

The Zn(2+) site is built by C75, H78, and C146.

The protein belongs to the GTP cyclohydrolase I family. Homomer.

The enzyme catalyses GTP + H2O = 7,8-dihydroneopterin 3'-triphosphate + formate + H(+). The protein operates within cofactor biosynthesis; 7,8-dihydroneopterin triphosphate biosynthesis; 7,8-dihydroneopterin triphosphate from GTP: step 1/1. This chain is GTP cyclohydrolase 1, found in Clostridium kluyveri (strain NBRC 12016).